Consider the following 628-residue polypeptide: Chaperone protein HtpG (628 aa).

The a; substrate-binding stretch occupies residues 1 to 333 (MTTDTKATET…SADLPLNVSR (333 aa)). The tract at residues 334–549 (EMIQESPLLA…EHGPDRQFER (216 aa)) is b. Residues 550 to 628 (LMNAAGRLDK…RLIARGIAKG (79 aa)) are c.

Belongs to the heat shock protein 90 family. Homodimer.

It is found in the cytoplasm. In terms of biological role, molecular chaperone. Has ATPase activity. The protein is Chaperone protein HtpG of Mesorhizobium japonicum (strain LMG 29417 / CECT 9101 / MAFF 303099) (Mesorhizobium loti (strain MAFF 303099)).